The chain runs to 286 residues: Shikimate dehydrogenase (NADP(+)) (286 aa).

Residues 20-22 (SLS) and T67 contribute to the shikimate site. K71 acts as the Proton acceptor in catalysis. 2 residues coordinate shikimate: N92 and D107. Residues 132 to 136 (GAGGA) and M228 contribute to the NADP(+) site. Y230 is a shikimate binding site. G251 is a binding site for NADP(+).

It belongs to the shikimate dehydrogenase family. Homodimer.

The enzyme catalyses shikimate + NADP(+) = 3-dehydroshikimate + NADPH + H(+). Its pathway is metabolic intermediate biosynthesis; chorismate biosynthesis; chorismate from D-erythrose 4-phosphate and phosphoenolpyruvate: step 4/7. Involved in the biosynthesis of the chorismate, which leads to the biosynthesis of aromatic amino acids. Catalyzes the reversible NADPH linked reduction of 3-dehydroshikimate (DHSA) to yield shikimate (SA). The sequence is that of Shikimate dehydrogenase (NADP(+)) from Geobacter sulfurreducens (strain ATCC 51573 / DSM 12127 / PCA).